Reading from the N-terminus, the 108-residue chain is UPF0145 protein LCA_1282 (108 aa).

The protein belongs to the UPF0145 family.

The sequence is that of UPF0145 protein LCA_1282 from Latilactobacillus sakei subsp. sakei (strain 23K) (Lactobacillus sakei subsp. sakei).